The chain runs to 82 residues: DNA-directed RNA polymerase subunit Rpo5 (82 aa).

This sequence belongs to the archaeal Rpo5/eukaryotic RPB5 RNA polymerase subunit family. In terms of assembly, part of the RNA polymerase complex.

It localises to the cytoplasm. It catalyses the reaction RNA(n) + a ribonucleoside 5'-triphosphate = RNA(n+1) + diphosphate. DNA-dependent RNA polymerase (RNAP) catalyzes the transcription of DNA into RNA using the four ribonucleoside triphosphates as substrates. The protein is DNA-directed RNA polymerase subunit Rpo5 of Thermococcus celer.